Consider the following 125-residue polypeptide: Protein 5 (125 aa).

This chain is Protein 5 (5), found in Hordeum vulgare (Barley).